Here is a 31-residue protein sequence, read N- to C-terminus: Potassium channel toxin alpha-KTx 19.2 (31 aa).

3 disulfide bridges follow: C3–C22, C8–C27, and C12–C29.

It belongs to the short scorpion toxin superfamily. Potassium channel inhibitor family. Alpha-KTx 19 subfamily. Monomer. In terms of tissue distribution, expressed by the venom gland.

The protein localises to the secreted. In terms of biological role, blocks voltage-gated potassium channels rKv1.1/KCNA1, rKv1.2/KCNA2, hKv1.3/KCNA3, rKv1.6/KCNA6 (IC(50)=75.9 nM) and, to a lesser extent, Shaker IR (with the inactivation domain removed). The protein is Potassium channel toxin alpha-KTx 19.2 of Buthus occitanus tunetanus (Common European scorpion).